We begin with the raw amino-acid sequence, 180 residues long: Superoxide dismutase [Cu-Zn] (180 aa).

The signal sequence occupies residues 1–19 (MFMNLLSQVSNAIFPQVEA). Positions 68, 70, and 85 each coordinate Cu cation. A disulfide bond links C79 and C171. Zn(2+)-binding residues include H85, H93, H102, and D105. H142 provides a ligand contact to Cu cation.

Belongs to the Cu-Zn superoxide dismutase family. As to quaternary structure, homodimer. Cu cation serves as cofactor. The cofactor is Zn(2+).

It localises to the cytoplasm. The enzyme catalyses 2 superoxide + 2 H(+) = H2O2 + O2. Functionally, destroys radicals which are normally produced within the cells and which are toxic to biological systems. Required for normal brood size. May be involved in regulating mpk-1 phosphorylation downstream of phosphatase ptp-2 during oocyte maturation. The polypeptide is Superoxide dismutase [Cu-Zn] (Caenorhabditis briggsae).